We begin with the raw amino-acid sequence, 152 residues long: MSPGSRRASPQSAREVVELDRDEAMRLLASVDHGRVVFTRAALPAIRPVNHLVVDGRVIGRTRLTAKVSVAVRSSADAGVVVAYEADDLDPRRRTGWSVVVTGLATEVSDPEQVARYQRLLHPWVNMAMDTVVAIEPEIVTGIRIVADSRTP.

This is an uncharacterized protein from Mycobacterium tuberculosis (strain ATCC 25618 / H37Rv).